A 376-amino-acid chain; its full sequence is Succinyl-diaminopimelate desuccinylase (376 aa).

His-66 contributes to the Zn(2+) binding site. The active site involves Asp-68. Asp-99 is a binding site for Zn(2+). Glu-133 serves as the catalytic Proton acceptor. 3 residues coordinate Zn(2+): Glu-134, Glu-162, and His-349.

The protein belongs to the peptidase M20A family. DapE subfamily. Homodimer. Zn(2+) serves as cofactor. Requires Co(2+) as cofactor.

The enzyme catalyses N-succinyl-(2S,6S)-2,6-diaminopimelate + H2O = (2S,6S)-2,6-diaminopimelate + succinate. It participates in amino-acid biosynthesis; L-lysine biosynthesis via DAP pathway; LL-2,6-diaminopimelate from (S)-tetrahydrodipicolinate (succinylase route): step 3/3. Its function is as follows. Catalyzes the hydrolysis of N-succinyl-L,L-diaminopimelic acid (SDAP), forming succinate and LL-2,6-diaminopimelate (DAP), an intermediate involved in the bacterial biosynthesis of lysine and meso-diaminopimelic acid, an essential component of bacterial cell walls. This chain is Succinyl-diaminopimelate desuccinylase, found in Buchnera aphidicola subsp. Cinara cedri (strain Cc).